Here is a 509-residue protein sequence, read N- to C-terminus: Maturase K (509 aa).

This sequence belongs to the intron maturase 2 family. MatK subfamily.

It localises to the plastid. Its subcellular location is the chloroplast. Its function is as follows. Usually encoded in the trnK tRNA gene intron. Probably assists in splicing its own and other chloroplast group II introns. This is Maturase K from Arpophyllum giganteum (Hyacinth orchid).